Here is a 353-residue protein sequence, read N- to C-terminus: MTAIIERRESANFWSRFCDWITSTENRLYIGWFGVLMIPTLLTATSVFIIAFIAAPPVDIDGIREPVSGSLLYGNNIISGAIIPTSAAIGLHFYPIWEAASVDEWLYNGGPYELIVLHFLLGVACYMGREWELSFRLGMRPWIAVAYSAPVAAATAVFLIYPIGQGSFSDGMPLGISGTFNFMIVFQAEHNILMHPFHMLGVAGVFGGSLFSAMHGSLVTSSLIRETTENQSANAGYKFGQEEETYNIVAAHGYFGRLIFQYASFNNSRSLHFFLAAWPVAGIWFTALGISTMAFNLNGFNFNQSVVDSQGRVINTWADIINRANLGMEVMHERNAHNFPLDLAAVESISIGG.

T2 carries the post-translational modification N-acetylthreonine. A Phosphothreonine modification is found at T2. The next 3 helical transmembrane spans lie at 29–46 (YIGW…TATS), 118–133 (HFLL…EWEL), and 142–156 (WIAV…AATA). H118 provides a ligand contact to chlorophyll a. Y126 contacts pheophytin a. Residues D170 and E189 each contribute to the [CaMn4O5] cluster site. A helical membrane pass occupies residues 197–218 (FHMLGVAGVFGGSLFSAMHGSL). H198 is a chlorophyll a binding site. A quinone contacts are provided by residues H215 and 264 to 265 (SF). H215 contacts Fe cation. H272 is a binding site for Fe cation. The chain crosses the membrane as a helical span at residues 274-288 (FLAAWPVAGIWFTAL). Residues H332, E333, D342, and A344 each contribute to the [CaMn4O5] cluster site. Positions 345–353 (AVESISIGG) are excised as a propeptide.

The protein belongs to the reaction center PufL/M/PsbA/D family. As to quaternary structure, PSII is composed of 1 copy each of membrane proteins PsbA, PsbB, PsbC, PsbD, PsbE, PsbF, PsbH, PsbI, PsbJ, PsbK, PsbL, PsbM, PsbT, PsbX, PsbY, PsbZ, Psb30/Ycf12, at least 3 peripheral proteins of the oxygen-evolving complex and a large number of cofactors. It forms dimeric complexes. The cofactor is The D1/D2 heterodimer binds P680, chlorophylls that are the primary electron donor of PSII, and subsequent electron acceptors. It shares a non-heme iron and each subunit binds pheophytin, quinone, additional chlorophylls, carotenoids and lipids. D1 provides most of the ligands for the Mn4-Ca-O5 cluster of the oxygen-evolving complex (OEC). There is also a Cl(-1) ion associated with D1 and D2, which is required for oxygen evolution. The PSII complex binds additional chlorophylls, carotenoids and specific lipids.. Post-translationally, tyr-161 forms a radical intermediate that is referred to as redox-active TyrZ, YZ or Y-Z. C-terminally processed by CTPA; processing is essential to allow assembly of the oxygen-evolving complex and thus photosynthetic growth.

The protein resides in the plastid. Its subcellular location is the chloroplast thylakoid membrane. The enzyme catalyses 2 a plastoquinone + 4 hnu + 2 H2O = 2 a plastoquinol + O2. In terms of biological role, photosystem II (PSII) is a light-driven water:plastoquinone oxidoreductase that uses light energy to abstract electrons from H(2)O, generating O(2) and a proton gradient subsequently used for ATP formation. It consists of a core antenna complex that captures photons, and an electron transfer chain that converts photonic excitation into a charge separation. The D1/D2 (PsbA/PsbD) reaction center heterodimer binds P680, the primary electron donor of PSII as well as several subsequent electron acceptors. In Pinus koraiensis (Korean pine), this protein is Photosystem II protein D1.